Reading from the N-terminus, the 33-residue chain is Alpha-amanitin proprotein 2 (33 aa).

The propeptide occupies 1–10 (MSDINATRLP). Residue isoleucine 11 is modified to (3R,4R)-4,5-dihydroxyisoleucine; in form alpha-amanitin. Position 11 is a (3R,4S)-4-hydroxyisoleucine; in form gamma-amanitin (isoleucine 11). Residues 11–18 (IWGIGCNP) constitute a cross-link (cyclopeptide (Ile-Pro)). Positions 12–16 (WGIGC) form a cross-link, 2'-cysteinyl-6'-hydroxytryptophan sulfoxide (Trp-Cys). 4-hydroxyproline is present on proline 18. A propeptide spanning residues 19-33 (CVGDDVTSVLTRGEA) is cleaved from the precursor.

The protein belongs to the MSDIN fungal toxin family. In terms of processing, processed by the macrocyclase-peptidase enzyme POPB to yield a toxic cyclic octapeptide. POPB first removes 10 residues from the N-terminus. Conformational trapping of the remaining peptide forces the enzyme to release this intermediate rather than proceed to macrocyclization. The enzyme rebinds the remaining peptide in a different conformation and catalyzes macrocyclization of the N-terminal 8 residues. As to expression, expressed in basidiocarps.

Major toxin belonging to the bicyclic octapeptides amatoxins that acts by binding non-competitively to RNA polymerase II and greatly slowing the elongation of transcripts from target promoters. The sequence is that of Alpha-amanitin proprotein 2 from Amanita exitialis (Guangzhou destroying angel).